Reading from the N-terminus, the 453-residue chain is Putative sodium-coupled neutral amino acid transporter 11 (453 aa).

Polar residues predominate over residues 1–10 (MSYQQPQLSG). Positions 1–34 (MSYQQPQLSGPLQRETDSSDRESLISGHEHGGKS) are disordered. A compositionally biased stretch (basic and acidic residues) spans 14–32 (RETDSSDRESLISGHEHGG). The next 11 helical transmembrane spans lie at 39–59 (AVFN…PYSM), 66–86 (LGIL…VLLI), 106–126 (GFPG…IAMI), 150–170 (GWFI…TLPL), 179–199 (LGKI…IVMT), 222–242 (AIQA…CFLV), 262–282 (ILVS…TFTG), 299–319 (VTFG…IECF), 337–357 (VFHT…SLMI), 359–379 (CLGI…IFII), and 398–418 (IMAC…FVMA). 2 N-linked (GlcNAc...) asparagine glycosylation sites follow: N438 and N443.

It belongs to the amino acid/polyamine transporter 2 family.

The protein resides in the membrane. Its function is as follows. Putative sodium-dependent amino acid/proton antiporter. The chain is Putative sodium-coupled neutral amino acid transporter 11 (Slc38a11) from Mus musculus (Mouse).